Here is a 409-residue protein sequence, read N- to C-terminus: Elongation factor Tu, chloroplastic (409 aa).

Positions 10–214 (KPHVNIGTIG…NVDSYIPTPA (205 aa)) constitute a tr-type G domain. The segment at 19-26 (GHVDHGKT) is G1. A GTP-binding site is contributed by 19-26 (GHVDHGKT). A Mg(2+)-binding site is contributed by Thr-26. A G2 region spans residues 60-64 (GITIN). Residues 81 to 84 (DCPG) form a G3 region. GTP-binding positions include 81-85 (DCPGH) and 136-139 (NKED). The tract at residues 136-139 (NKED) is G4. Residues 174 to 176 (SAL) form a G5 region.

This sequence belongs to the TRAFAC class translation factor GTPase superfamily. Classic translation factor GTPase family. EF-Tu/EF-1A subfamily.

The protein resides in the plastid. It localises to the chloroplast. It carries out the reaction GTP + H2O = GDP + phosphate + H(+). GTP hydrolase that promotes the GTP-dependent binding of aminoacyl-tRNA to the A-site of ribosomes during protein biosynthesis. The polypeptide is Elongation factor Tu, chloroplastic (tufA) (Ostreococcus tauri).